A 107-amino-acid polypeptide reads, in one-letter code: uncharacterized protein (107 aa).

The tract at residues 1 to 32 (MDSLASGRWRRRRTEELPAAGDAKRACRRSEP) is disordered. Positions 22 to 31 (DAKRACRRSE) are enriched in basic and acidic residues.

This is an uncharacterized protein from Mus musculus (Mouse).